A 145-amino-acid polypeptide reads, in one-letter code: Deoxyuridine 5'-triphosphate nucleotidohydrolase (145 aa).

Substrate contacts are provided by residues 64 to 66 (RSG), Asn77, 81 to 83 (TID), and Met91.

Belongs to the dUTPase family. Requires Mg(2+) as cofactor.

It carries out the reaction dUTP + H2O = dUMP + diphosphate + H(+). It functions in the pathway pyrimidine metabolism; dUMP biosynthesis; dUMP from dCTP (dUTP route): step 2/2. This enzyme is involved in nucleotide metabolism: it produces dUMP, the immediate precursor of thymidine nucleotides and it decreases the intracellular concentration of dUTP so that uracil cannot be incorporated into DNA. The protein is Deoxyuridine 5'-triphosphate nucleotidohydrolase of Leptospira interrogans serogroup Icterohaemorrhagiae serovar copenhageni (strain Fiocruz L1-130).